The following is a 306-amino-acid chain: Cysteine synthase (306 aa).

Lysine 46 is subject to N6-(pyridoxal phosphate)lysine. Residues asparagine 76, 180–184 (GSGGT), and serine 267 each bind pyridoxal 5'-phosphate.

The protein belongs to the cysteine synthase/cystathionine beta-synthase family. In terms of assembly, homodimer. Pyridoxal 5'-phosphate is required as a cofactor.

The catalysed reaction is O-acetyl-L-serine + hydrogen sulfide = L-cysteine + acetate. Its pathway is amino-acid biosynthesis; L-cysteine biosynthesis; L-cysteine from L-serine: step 2/2. This is Cysteine synthase (cysM) from Helicobacter pylori (strain ATCC 700392 / 26695) (Campylobacter pylori).